We begin with the raw amino-acid sequence, 185 residues long: Capsid protein (185 aa).

A disordered region spans residues 136 to 185; that stretch reads NAPILSTLPETTVVRRRDRGRSPRRRTPSPRRRRSQSPRRRRSQSRESQC. The segment covering 149 to 178 has biased composition (basic residues); that stretch reads VRRRDRGRSPRRRTPSPRRRRSQSPRRRRS. 3 positions are modified to phosphoserine; by host: serine 157, serine 164, and serine 172. The 1; half-length repeat unit spans residues 157-163; that stretch reads SPRRRTP. A 3 X 8 AA repeats of S-P-R-R-R-[PR]-S-Q region spans residues 157–179; the sequence is SPRRRTPSPRRRRSQSPRRRRSQ. The short motif at 160 to 177 is the Bipartite nuclear localization signal element; sequence RRTPSPRRRRSQSPRRRR. A run of 2 repeats spans residues 164–171 and 172–179. The RNA binding stretch occupies residues 179 to 185; sequence QSRESQC.

This sequence belongs to the orthohepadnavirus core antigen family. As to quaternary structure, homodimerizes, then multimerizes. Interacts with cytosol exposed regions of viral L glycoprotein present in the reticulum-to-Golgi compartment. Interacts with human FLNB. Phosphorylated form interacts with host importin alpha; this interaction depends on the exposure of the NLS, which itself depends upon genome maturation and/or phosphorylation of the capsid protein. Interacts with host NUP153. Post-translationally, phosphorylated by host SRPK1, SRPK2, and maybe protein kinase C or GAPDH. Phosphorylation is critical for pregenomic RNA packaging. Protein kinase C phosphorylation is stimulated by HBx protein and may play a role in transport of the viral genome to the nucleus at the late step during the viral replication cycle.

It localises to the virion. The protein resides in the host cytoplasm. Functionally, self assembles to form an icosahedral capsid. Most capsids appear to be large particles with an icosahedral symmetry of T=4 and consist of 240 copies of capsid protein, though a fraction forms smaller T=3 particles consisting of 180 capsid proteins. Entering capsids are transported along microtubules to the nucleus. Phosphorylation of the capsid is thought to induce exposure of nuclear localization signal in the C-terminal portion of the capsid protein that allows binding to the nuclear pore complex via the importin (karyopherin-) alpha and beta. Capsids are imported in intact form through the nuclear pore into the nuclear basket, where it probably binds NUP153. Only capsids that contain the mature viral genome can release the viral DNA and capsid protein into the nucleoplasm. Immature capsids get stuck in the basket. Capsids encapsulate the pre-genomic RNA and the P protein. Pre-genomic RNA is reverse-transcribed into DNA while the capsid is still in the cytoplasm. The capsid can then either be directed to the nucleus, providing more genomes for transcription, or bud through the endoplasmic reticulum to provide new virions. The protein is Capsid protein of Hepatitis B virus genotype A1 subtype adw (isolate Philippines/pFDW294/1988) (HBV-A).